Reading from the N-terminus, the 315-residue chain is Ribosomal RNA small subunit methyltransferase H (315 aa).

Residues 37–39 (GGH), D57, F83, D105, and Q112 each bind S-adenosyl-L-methionine.

Belongs to the methyltransferase superfamily. RsmH family.

It localises to the cytoplasm. It carries out the reaction cytidine(1402) in 16S rRNA + S-adenosyl-L-methionine = N(4)-methylcytidine(1402) in 16S rRNA + S-adenosyl-L-homocysteine + H(+). In terms of biological role, specifically methylates the N4 position of cytidine in position 1402 (C1402) of 16S rRNA. The sequence is that of Ribosomal RNA small subunit methyltransferase H from Pseudomonas putida (strain W619).